A 509-amino-acid chain; its full sequence is Putative ATP-dependent RNA helicase QP509L (509 aa).

The Helicase ATP-binding domain occupies 110–262; it reads KKLLSPYGRF…KIIIHHLGQP (153 aa). 123–130 is an ATP binding site; that stretch reads LNTGLGKT. Positions 215–218 match the DEAH box motif; the sequence is DEAH.

The protein belongs to the DEAD box helicase family. DEAH subfamily.

It catalyses the reaction ATP + H2O = ADP + phosphate + H(+). The protein is Putative ATP-dependent RNA helicase QP509L of African swine fever virus (strain Badajoz 1971 Vero-adapted) (Ba71V).